We begin with the raw amino-acid sequence, 338 residues long: uncharacterized protein (338 aa).

The disordered stretch occupies residues 1–72 (MASPPILSRE…LNPVEDYDSK (72 aa)). A compositionally biased stretch (polar residues) spans 24-38 (GGNSEVNIDPSASSS). The span at 49 to 58 (ADTKIDPHLL) shows a compositional bias: basic and acidic residues. Residues 59–68 (EEDDLNPVED) show a composition bias toward acidic residues.

The protein resides in the cytoplasm. It localises to the nucleus. This is an uncharacterized protein from Schizosaccharomyces pombe (strain 972 / ATCC 24843) (Fission yeast).